Consider the following 286-residue polypeptide: UDP-3-O-acyl-N-acetylglucosamine deacetylase (286 aa).

Zn(2+) contacts are provided by His79, His237, and Asp241. The active-site Proton donor is the His264.

This sequence belongs to the LpxC family. The cofactor is Zn(2+).

The catalysed reaction is a UDP-3-O-[(3R)-3-hydroxyacyl]-N-acetyl-alpha-D-glucosamine + H2O = a UDP-3-O-[(3R)-3-hydroxyacyl]-alpha-D-glucosamine + acetate. Its pathway is glycolipid biosynthesis; lipid IV(A) biosynthesis; lipid IV(A) from (3R)-3-hydroxytetradecanoyl-[acyl-carrier-protein] and UDP-N-acetyl-alpha-D-glucosamine: step 2/6. Catalyzes the hydrolysis of UDP-3-O-myristoyl-N-acetylglucosamine to form UDP-3-O-myristoylglucosamine and acetate, the committed step in lipid A biosynthesis. The protein is UDP-3-O-acyl-N-acetylglucosamine deacetylase of Chlamydia trachomatis serovar L2 (strain ATCC VR-902B / DSM 19102 / 434/Bu).